Reading from the N-terminus, the 347-residue chain is UPF0283 membrane protein ECA1987 (347 aa).

A compositionally biased stretch (basic and acidic residues) spans 1 to 11 (MNEPLKPRVTF). The disordered stretch occupies residues 1–48 (MNEPLKPRVTFDDVSPQEPQPQLRAGLAFDEQSSTPFSPISREEEVPE). The next 3 helical transmembrane spans lie at 70-90 (MVMA…VQSL), 99-119 (WIAL…VGSL), and 213-233 (ESTL…FIAW).

It belongs to the UPF0283 family.

The protein resides in the cell inner membrane. The protein is UPF0283 membrane protein ECA1987 of Pectobacterium atrosepticum (strain SCRI 1043 / ATCC BAA-672) (Erwinia carotovora subsp. atroseptica).